The chain runs to 418 residues: F-box/kelch-repeat protein SKIP20 (418 aa).

The F-box domain occupies 14–61 (DLIPGLPEELAIECLVRVPFQFHSSIKSVCRSWKCVISSRSFIKERIG). Residues 79–104 (PSPAMMEGGEMSQKKKEEEEGESQMT) form a disordered region. Kelch repeat units follow at residues 104-150 (TQQL…AIQD), 153-206 (KVLL…SVGS), 208-255 (KVYV…SMAT), and 258-314 (GFCV…EFPG).

Part of a SCF (ASK-cullin-F-box) protein ligase complex. Interacts with SKP1A/ASK1 and SPK1B/ASK2.

It localises to the nucleus. The protein operates within protein modification; protein ubiquitination. In terms of biological role, component of SCF(ASK-cullin-F-box) E3 ubiquitin ligase complexes, which may mediate the ubiquitination and subsequent proteasomal degradation of target proteins. The chain is F-box/kelch-repeat protein SKIP20 (SKIP20) from Arabidopsis thaliana (Mouse-ear cress).